We begin with the raw amino-acid sequence, 65 residues long: Large ribosomal subunit protein bL35 (65 aa).

Residues 1–30 (MPKMKTNRGAAKRFRKTASGRFKSKQSHLR) are disordered. The span at 10 to 30 (AAKRFRKTASGRFKSKQSHLR) shows a compositional bias: basic residues.

It belongs to the bacterial ribosomal protein bL35 family.

The protein is Large ribosomal subunit protein bL35 of Pseudoalteromonas atlantica (strain T6c / ATCC BAA-1087).